Reading from the N-terminus, the 413-residue chain is MFDGSNLGRNTIAMVLAGGKGERLMPLTLRRAKPSVTFGGKYKIIDFVLSNLFNSGIRRMYILTQYRAYSLNKHIRESWGKWTGLGEFCVAISPETSSDSEQWFKGTADAILQYLRFVETADADYVAVFGGDHIYKMDVTQMIQFHRMNRADLTIASLEVPKEEASRFGVFSVDDDNRVTAFTEKPKDPETIPGRETCFASMGNYIFPTRKLIEVLLEGKKHYEDLDFGKHVIPMMLEKGDRIYAYNFNDNLVPGMKSEERGYWKDVGTLDSYYEANMDLIHVSPQLNLYNYKWPILTNQGNLPPAKTVFDEEGRRGVNIDSYVTGGCITSGSTVRRSILGPMCKINSYSLVEDSILFEGVTVGRHVKIKKAIIDKGVVIPDGAEIGCNHEDDIKNGYTITESGIVVVPRKDR.

Residues G169, 184–185, and S201 each bind alpha-D-glucose 1-phosphate; that span reads EK.

This sequence belongs to the bacterial/plant glucose-1-phosphate adenylyltransferase family. As to quaternary structure, homotetramer.

It carries out the reaction alpha-D-glucose 1-phosphate + ATP + H(+) = ADP-alpha-D-glucose + diphosphate. It functions in the pathway glycan biosynthesis; glycogen biosynthesis. Involved in the biosynthesis of ADP-glucose, a building block required for the elongation reactions to produce glycogen. Catalyzes the reaction between ATP and alpha-D-glucose 1-phosphate (G1P) to produce pyrophosphate and ADP-Glc. The polypeptide is Glucose-1-phosphate adenylyltransferase (Trichlorobacter lovleyi (strain ATCC BAA-1151 / DSM 17278 / SZ) (Geobacter lovleyi)).